The sequence spans 331 residues: MCWTMPSPFTGSSTRNMESGNQSTVTEFIFTGFPQLQDGSLLYFFPLLFIYTFIIIDNLLIFSAVRLDTHLHNPMYNFISIFSFLEIWYTTATIPKMLSNLISEKKAISMTGCILQMYFFHSLENSEGILLTTMAIDRYVAICNPLRYQMIMTPRLCAQLSAGSCLFGFLILLPEIVMISTLPFCGPNQIHQIFCDLVPVLSLACTDTSMILIEDVIHAVTIIITFLIIALSYVRIVTVILRIPSSEGRQKAFSTCAGHLMVFPIFFGSVSLMYLRFSDTYPPVLDTAIALMFTVLAPFFNPIIYSLRNKDMNNAIKKLFCLQKVLNKPGG.

The Extracellular portion of the chain corresponds to 1 to 41 (MCWTMPSPFTGSSTRNMESGNQSTVTEFIFTGFPQLQDGSL). A glycan (N-linked (GlcNAc...) asparagine) is linked at asparagine 21. The chain crosses the membrane as a helical span at residues 42 to 62 (LYFFPLLFIYTFIIIDNLLIF). Residues 63–70 (SAVRLDTH) are Cytoplasmic-facing. A helical transmembrane segment spans residues 71-91 (LHNPMYNFISIFSFLEIWYTT). At 92-115 (ATIPKMLSNLISEKKAISMTGCIL) the chain is on the extracellular side. Cysteine 113 and cysteine 205 are joined by a disulfide. A helical transmembrane segment spans residues 116-136 (QMYFFHSLENSEGILLTTMAI). Residues 137-155 (DRYVAICNPLRYQMIMTPR) lie on the Cytoplasmic side of the membrane. The helical transmembrane segment at 156–176 (LCAQLSAGSCLFGFLILLPEI) threads the bilayer. At 177 to 212 (VMISTLPFCGPNQIHQIFCDLVPVLSLACTDTSMIL) the chain is on the extracellular side. A helical transmembrane segment spans residues 213-232 (IEDVIHAVTIIITFLIIALS). Residues 233 to 252 (YVRIVTVILRIPSSEGRQKA) lie on the Cytoplasmic side of the membrane. The chain crosses the membrane as a helical span at residues 253–273 (FSTCAGHLMVFPIFFGSVSLM). Over 274–286 (YLRFSDTYPPVLD) the chain is Extracellular. Residues 287-307 (TAIALMFTVLAPFFNPIIYSL) traverse the membrane as a helical segment. The Cytoplasmic portion of the chain corresponds to 308–331 (RNKDMNNAIKKLFCLQKVLNKPGG).

This sequence belongs to the G-protein coupled receptor 1 family.

It localises to the cell membrane. Functionally, odorant receptor. The protein is Olfactory receptor 6K3 (OR6K3) of Homo sapiens (Human).